Here is a 122-residue protein sequence, read N- to C-terminus: LYR motif-containing protein 1 (122 aa).

This sequence belongs to the complex I LYR family. High levels in adipose tissue.

The protein localises to the nucleus. May promote cell proliferation and inhibition of apoptosis of preadipocytes. The sequence is that of LYR motif-containing protein 1 (LYRM1) from Homo sapiens (Human).